A 240-amino-acid chain; its full sequence is Thiamine-phosphate synthase (240 aa).

4-amino-2-methyl-5-(diphosphooxymethyl)pyrimidine contacts are provided by residues 63 to 67 (QYREK) and Asn-94. Mg(2+)-binding residues include Asp-95 and Asp-114. Thr-133 is a 4-amino-2-methyl-5-(diphosphooxymethyl)pyrimidine binding site. Residue 159-161 (TFT) participates in 2-[(2R,5Z)-2-carboxy-4-methylthiazol-5(2H)-ylidene]ethyl phosphate binding. A 4-amino-2-methyl-5-(diphosphooxymethyl)pyrimidine-binding site is contributed by Lys-162. 2-[(2R,5Z)-2-carboxy-4-methylthiazol-5(2H)-ylidene]ethyl phosphate-binding positions include Gly-190 and 210-211 (IS).

It belongs to the thiamine-phosphate synthase family. Mg(2+) is required as a cofactor.

It catalyses the reaction 2-[(2R,5Z)-2-carboxy-4-methylthiazol-5(2H)-ylidene]ethyl phosphate + 4-amino-2-methyl-5-(diphosphooxymethyl)pyrimidine + 2 H(+) = thiamine phosphate + CO2 + diphosphate. The catalysed reaction is 2-(2-carboxy-4-methylthiazol-5-yl)ethyl phosphate + 4-amino-2-methyl-5-(diphosphooxymethyl)pyrimidine + 2 H(+) = thiamine phosphate + CO2 + diphosphate. The enzyme catalyses 4-methyl-5-(2-phosphooxyethyl)-thiazole + 4-amino-2-methyl-5-(diphosphooxymethyl)pyrimidine + H(+) = thiamine phosphate + diphosphate. It functions in the pathway cofactor biosynthesis; thiamine diphosphate biosynthesis; thiamine phosphate from 4-amino-2-methyl-5-diphosphomethylpyrimidine and 4-methyl-5-(2-phosphoethyl)-thiazole: step 1/1. Its function is as follows. Condenses 4-methyl-5-(beta-hydroxyethyl)thiazole monophosphate (THZ-P) and 2-methyl-4-amino-5-hydroxymethyl pyrimidine pyrophosphate (HMP-PP) to form thiamine monophosphate (TMP). This Methanosarcina mazei (strain ATCC BAA-159 / DSM 3647 / Goe1 / Go1 / JCM 11833 / OCM 88) (Methanosarcina frisia) protein is Thiamine-phosphate synthase.